Reading from the N-terminus, the 232-residue chain is Ribonuclease 3 (232 aa).

Positions 6–137 (QEMLKRDFNI…FIGALYLDQG (132 aa)) constitute an RNase III domain. Glu-50 contributes to the Mg(2+) binding site. Residue Asp-54 is part of the active site. 2 residues coordinate Mg(2+): Asp-123 and Glu-126. Glu-126 is an active-site residue. Residues 163 to 232 (DNKTELQEVL…AYQALKKLRK (70 aa)) enclose the DRBM domain.

Belongs to the ribonuclease III family. In terms of assembly, homodimer. Requires Mg(2+) as cofactor.

The protein localises to the cytoplasm. The catalysed reaction is Endonucleolytic cleavage to 5'-phosphomonoester.. Functionally, digests double-stranded RNA. Involved in the processing of primary rRNA transcript to yield the immediate precursors to the large and small rRNAs (23S and 16S). Processes some mRNAs, and tRNAs when they are encoded in the rRNA operon. Processes pre-crRNA and tracrRNA of type II CRISPR loci if present in the organism. The sequence is that of Ribonuclease 3 from Ligilactobacillus salivarius (strain UCC118) (Lactobacillus salivarius).